Consider the following 358-residue polypeptide: MTAAQAKTTKKNTAAAAQEAAGAAQPSGLGLDSIGDLSSLLDAPAASQGGSGPIELDLDLIDEDPHQPRTADNPGFSPESIAEIGATIKERGVKSPISVRENQEQPGRYIINHGARRYRGSKWAGKKSIPAFIDNDYNEADQVIENLQRNELTPREIADFIGRELAKGKKKGDIAKEIGKSPAFITQHVTLLDLPEKIADAFNTGRVRDVTVVNELVTAFKKRPEEVEAWLDDDTQEITRGTVKLLREFLDEKGRDPNTVDAFNGQTDAERDAEAGDGQDGEDGDQDGKDAKEKGAKEPDPDKLKKAIVQVEHDERPARLILNRRPPAEGYAWLKYEDDGQEFEANLADVKLVALIEG.

The segment covering 1–42 (MTAAQAKTTKKNTAAAAQEAAGAAQPSGLGLDSIGDLSSLLD) has biased composition (low complexity). Disordered regions lie at residues 1–79 (MTAA…FSPE) and 256–305 (DPNT…DKLK). Acidic residues predominate over residues 275–285 (AGDGQDGEDGD). The segment covering 286–305 (QDGKDAKEKGAKEPDPDKLK) has biased composition (basic and acidic residues).

It belongs to the ParB family.

In conjunction with KorA, inhibits the transcription of the kilA, trfA and korAB operons. Is also involved in the negative control of the kilB operon. This chain is Transcriptional repressor protein KorB (korB), found in Escherichia coli.